A 396-amino-acid polypeptide reads, in one-letter code: Phosphoglycerate kinase (396 aa).

Residues 21 to 23 (DFN), Arg-36, 59 to 62 (HLGK), Arg-119, and Arg-156 each bind substrate. Residues Lys-206, Gly-294, Glu-325, and 352-355 (GGDS) contribute to the ATP site.

It belongs to the phosphoglycerate kinase family. In terms of assembly, monomer.

It localises to the cytoplasm. It catalyses the reaction (2R)-3-phosphoglycerate + ATP = (2R)-3-phospho-glyceroyl phosphate + ADP. It functions in the pathway carbohydrate degradation; glycolysis; pyruvate from D-glyceraldehyde 3-phosphate: step 2/5. This is Phosphoglycerate kinase from Staphylococcus aureus (strain bovine RF122 / ET3-1).